We begin with the raw amino-acid sequence, 496 residues long: Probable ATP-dependent DNA helicase RecS (496 aa).

The Helicase ATP-binding domain occupies 25-192 (IESILSGKDT…MNLLELQHAV (168 aa)). 38–45 (LPTGGGKS) contacts ATP. The short motif at 136–139 (DEAH) is the DEAH box element. The 145-residue stretch at 219–363 (RVIQLVENLQ…EIADVIRVLE (145 aa)) folds into the Helicase C-terminal domain.

This sequence belongs to the helicase family. RecQ subfamily. Interacts with SSB (ssbA) and YpbB.

It localises to the cytoplasm. It is found in the nucleoid. The catalysed reaction is Couples ATP hydrolysis with the unwinding of duplex DNA by translocating in the 3'-5' direction.. The enzyme catalyses ATP + H2O = ADP + phosphate + H(+). In terms of biological role, probable 3'-5' DNA helicase. Required in synaptic and/or post-synaptic stages of recombination. Probably has an overlapping function with RecQ. It probably acts to help generate ss-DNA from ds-DNA breaks. In Bacillus subtilis (strain 168), this protein is Probable ATP-dependent DNA helicase RecS.